The chain runs to 256 residues: Floral homeotic protein APETALA 1 (256 aa).

An MADS-box domain is found at 1 to 61; the sequence is MGRGRVQLKR…GKLFEYSTDS (61 aa). The K-box domain maps to 88 to 178; sequence NTNWSMEYNR…SKQIKEREKV (91 aa). The tract at residues 180–206 is disordered; sequence RAQQEQWDQQNHGQNMPPPPPPQEHQI.

In terms of assembly, homodimer capable of binding to CArG-box sequences.

The protein localises to the nucleus. In terms of biological role, transcription factor that promotes early floral meristem identity in synergy with LEAFY. Displays a redundant function with CAULIFLOWER in the up-regulation of LEAFY. Required subsequently for the transition of an inflorescence meristem into a floral meristem, and for the normal development of sepals and petals in flowers. Regulates positively B class homeotic proteins. In Brassica rapa subsp. pekinensis (Chinese cabbage), this protein is Floral homeotic protein APETALA 1 (AP1).